Here is a 356-residue protein sequence, read N- to C-terminus: Icosanoyl-CoA 5-desaturase (356 aa).

Residues 5 to 25 traverse the membrane as a helical segment; sequence LYFPISISLSLSLEAMASFIA. The disordered stretch occupies residues 38–58; it reads LDPKIPTKPEPKTETPKPKDD. Residues 42–58 show a composition bias toward basic and acidic residues; that stretch reads IPTKPEPKTETPKPKDD. 2 helical membrane-spanning segments follow: residues 88–108 and 111–131; these read NAVT…YFSW and FWIS…TLCF. The short motif at 132–137 is the Histidine box-1 element; it reads HRCLTH. A Histidine box-2 motif is present at residues 169–173; that stretch reads HRYHH. Residues 236-256 form a helical membrane-spanning segment; the sequence is ALIALLYYVGGFPYIVWGMGF. A Histidine box-3 motif is present at residues 302–306; sequence HNNHH.

Belongs to the fatty acid desaturase type 1 family. Fe(2+) is required as a cofactor.

Its subcellular location is the membrane. It carries out the reaction eicosanoyl-CoA + 2 Fe(II)-[cytochrome b5] + O2 + 2 H(+) = (5Z)-eicosenoyl-CoA + 2 Fe(III)-[cytochrome b5] + 2 H2O. It functions in the pathway lipid metabolism; monounsaturated fatty acid biosynthesis. Functionally, desaturase involved in the biosynthesis of (5Z)-icos-5-enoate, an unusual monounsaturated fatty acid that makes up to 60% of the total fatty acids in Limnanthes sp. seed oil. Only acts on saturated fatty acids. The sequence is that of Icosanoyl-CoA 5-desaturase from Limnanthes douglasii (Douglas' meadowfoam).